The sequence spans 174 residues: Cytoglobin-1 (174 aa).

Positions 15 to 165 (SLTEEDVCVI…LYWQMNRVYA (151 aa)) constitute a Globin domain. His-78 and His-110 together coordinate heme b.

This sequence belongs to the globin family. As to quaternary structure, monomeric. In terms of tissue distribution, expressed in all tissues examined with highest levels in brain, eye, gut and heart.

It is found in the cytoplasm. It localises to the nucleus. It carries out the reaction Fe(II)-heme b-[protein] + nitric oxide + O2 = Fe(III)-heme b-[protein] + nitrate. The enzyme catalyses Fe(III)-heme b-[protein] + nitric oxide + H2O = Fe(II)-heme b-[protein] + nitrite + 2 H(+). It catalyses the reaction 2 superoxide + 2 H(+) = H2O2 + O2. The catalysed reaction is H2O2 + AH2 = A + 2 H2O. Functionally, probable multifunctional globin with a hexacoordinated heme iron required for the catalysis of various reactions depending on redox condition of the cell as well as oxygen availability. Has a nitric oxide dioxygenase (NOD) activity and is most probably involved in cell-mediated and oxygen-dependent nitric oxide consumption. Under normoxic conditions functions as a nitric oxide dioxygenase (NOD) but under hypoxic conditions the globin may switch its function to that of a nitrite (NO2) reductase (NiR), generating nitric oxide. Could also have peroxidase and superoxide dismutase activities, detoxifying reactive oxygen species and protecting cells against oxidative stress. Also binds dioxygen with low affinity and could function as an oxygen sensor but has probably no function as a respiratory oxygen carrier. The sequence is that of Cytoglobin-1 (cygb1) from Danio rerio (Zebrafish).